Here is a 144-residue protein sequence, read N- to C-terminus: D-aminoacyl-tRNA deacylase (144 aa).

The short motif at 136–137 (GP) is the Gly-cisPro motif, important for rejection of L-amino acids element.

This sequence belongs to the DTD family. As to quaternary structure, homodimer.

Its subcellular location is the cytoplasm. The catalysed reaction is glycyl-tRNA(Ala) + H2O = tRNA(Ala) + glycine + H(+). The enzyme catalyses a D-aminoacyl-tRNA + H2O = a tRNA + a D-alpha-amino acid + H(+). In terms of biological role, an aminoacyl-tRNA editing enzyme that deacylates mischarged D-aminoacyl-tRNAs. Also deacylates mischarged glycyl-tRNA(Ala), protecting cells against glycine mischarging by AlaRS. Acts via tRNA-based rather than protein-based catalysis; rejects L-amino acids rather than detecting D-amino acids in the active site. By recycling D-aminoacyl-tRNA to D-amino acids and free tRNA molecules, this enzyme counteracts the toxicity associated with the formation of D-aminoacyl-tRNA entities in vivo and helps enforce protein L-homochirality. This Glaesserella parasuis serovar 5 (strain SH0165) (Haemophilus parasuis) protein is D-aminoacyl-tRNA deacylase.